The chain runs to 307 residues: Agmatinase (307 aa).

6 residues coordinate Mn(2+): histidine 126, aspartate 149, histidine 151, aspartate 153, aspartate 230, and aspartate 232.

It belongs to the arginase family. Agmatinase subfamily. Requires Mn(2+) as cofactor.

It catalyses the reaction agmatine + H2O = urea + putrescine. The protein operates within amine and polyamine biosynthesis; putrescine biosynthesis via agmatine pathway; putrescine from agmatine: step 1/1. Its function is as follows. Catalyzes the formation of putrescine from agmatine. The polypeptide is Agmatinase (Sodalis glossinidius (strain morsitans)).